The chain runs to 301 residues: Multifunctional dioxygenase prhA (301 aa).

His130, Asp132, and His214 together coordinate Fe cation.

Belongs to the PhyH family. As to quaternary structure, homodimer. It depends on Fe cation as a cofactor.

It carries out the reaction preaustinoid A1 + 2-oxoglutarate + O2 = berkeleyone B + succinate + CO2 + H2O. The catalysed reaction is berkeleyone B + 2-oxoglutarate + O2 = berkeleydione + succinate + CO2 + H2O. It catalyses the reaction preaustinoid A + 2 2-oxoglutarate + 2 O2 = berkeleytrione + 2 succinate + 2 CO2 + H2O. Its pathway is secondary metabolite biosynthesis; terpenoid biosynthesis. Multifunctional dioxygenase; part of the gene cluster that mediates the biosynthesis of paraherquonin, a meroterpenoid with a unique, highly congested hexacyclic molecular architecture. The first step of the pathway is the synthesis of 3,5-dimethylorsellinic acid (DMOA) by the polyketide synthase prhL. Synthesis of DMOA is followed by farnesylation by the prenyltransferase prhE, methylesterification by the methyl-transferase prhM, epoxidation of the prenyl chain by the flavin-dependent monooxygenase prhF, and cyclization of the farnesyl moiety by the terpene cyclase prhH, to yield the tetracyclic intermediate, protoaustinoid A. The short chain dehydrogenase prhI then oxidizes the C-3 alcohol group of the terpene cyclase product to transform protoaustinoid A into protoaustinoid B. The FAD-binding monooxygenase prhJ catalyzes the oxidation of protoaustinoid B into preaustinoid A which is further oxidized into preaustinoid A1 by FAD-binding monooxygenase phrK. Finally, prhA leads to berkeleydione via the berkeleyone B intermediate. PrhA is a multifunctional dioxygenase that first desaturates at C5-C6 to form berkeleyone B, followed by rearrangement of the A/B-ring to form the cycloheptadiene moiety in berkeleydione. Berkeleydione serves as the key intermediate for the biosynthesis of paraherquonin as well as many other meroterpenoids. The cytochrome P450 monooxygenases prhB, prhD, and prhN, as well as the isomerase prhC, are probably involved in the late stage of paraherquonin biosynthesis, after the production of berkeleydione. Especially prhC might be a multifunctional enzyme that catalyzes the D-ring expansion via intramolecular methoxy rearrangement, as well as the hydrolysis of the expanded D-ring. This is Multifunctional dioxygenase prhA from Penicillium brasilianum.